We begin with the raw amino-acid sequence, 208 residues long: Outer-membrane lipoprotein carrier protein (208 aa).

An N-terminal signal peptide occupies residues 1–22 (MRKTLTALMLSLPLLTPHMAFA).

Belongs to the LolA family. In terms of assembly, monomer.

It is found in the periplasm. Its function is as follows. Participates in the translocation of lipoproteins from the inner membrane to the outer membrane. Only forms a complex with a lipoprotein if the residue after the N-terminal Cys is not an aspartate (The Asp acts as a targeting signal to indicate that the lipoprotein should stay in the inner membrane). The protein is Outer-membrane lipoprotein carrier protein of Shewanella woodyi (strain ATCC 51908 / MS32).